A 744-amino-acid polypeptide reads, in one-letter code: C-type polyheme cytochrome OmcB (744 aa).

Residues 1 to 23 form the signal peptide; the sequence is MSRKVTKYSAVLAVSLFAAALAG. Cysteine 24 carries N-palmitoyl cysteine lipidation. The S-diacylglycerol cysteine moiety is linked to residue cysteine 24. Heme c-binding residues include cysteine 48, cysteine 51, histidine 52, cysteine 81, cysteine 84, histidine 85, cysteine 107, cysteine 110, histidine 111, cysteine 141, cysteine 144, histidine 145, cysteine 185, cysteine 188, histidine 189, cysteine 225, cysteine 228, histidine 229, cysteine 303, cysteine 306, histidine 307, cysteine 382, cysteine 385, histidine 386, cysteine 430, cysteine 433, histidine 434, cysteine 480, cysteine 483, histidine 484, cysteine 555, cysteine 558, histidine 559, cysteine 587, cysteine 590, and histidine 591.

In terms of processing, binds 12 heme c groups per subunit.

The protein localises to the cell outer membrane. Functionally, involved in anaerobic respiration with Fe(3+) as terminal electron acceptor. Acts as an electron-transport mediator in the dissimilatory reduction of Fe(3+). The polypeptide is C-type polyheme cytochrome OmcB (omcB) (Geobacter sulfurreducens (strain DL-1 / KN400)).